A 145-amino-acid polypeptide reads, in one-letter code: Transcription elongation factor 1 (145 aa).

Positions 25, 28, 49, and 52 each coordinate Zn(2+). Ser-55 carries the phosphoserine modification. Residues 80–145 (VNSGRGSDTD…RGALVDSDDE (66 aa)) are disordered. Composition is skewed to acidic residues over residues 88-104 (TDDGDEGSDSDYESDSE) and 113-126 (GEIDSDEEEVDSDE). Residues Ser-117, Ser-124, and Ser-142 each carry the phosphoserine modification.

This sequence belongs to the ELOF1 family.

Its subcellular location is the nucleus. Its function is as follows. Transcription elongation factor implicated in the maintenance of proper chromatin structure in actively transcribed regions. The chain is Transcription elongation factor 1 (ELF1) from Saccharomyces cerevisiae (strain ATCC 204508 / S288c) (Baker's yeast).